Consider the following 388-residue polypeptide: Fructose-bisphosphate aldolase, chloroplastic (388 aa).

The transit peptide at Met-1–Ala-38 directs the protein to the chloroplast. Residue Arg-72 coordinates substrate. Glu-215 functions as the Proton acceptor in the catalytic mechanism. The Schiff-base intermediate with dihydroxyacetone-P role is filled by Lys-257. Residues Ser-299–Gly-301 and Arg-329 each bind substrate.

Belongs to the class I fructose-bisphosphate aldolase family. Homotetramer. Expressed in leaf mesophyll cells.

It is found in the plastid. It localises to the chloroplast. The protein resides in the plastoglobule. The enzyme catalyses beta-D-fructose 1,6-bisphosphate = D-glyceraldehyde 3-phosphate + dihydroxyacetone phosphate. It functions in the pathway carbohydrate degradation; glycolysis; D-glyceraldehyde 3-phosphate and glycerone phosphate from D-glucose: step 4/4. Its function is as follows. Plays a key role in glycolysis and gluconeogenesis. This is Fructose-bisphosphate aldolase, chloroplastic from Oryza sativa subsp. japonica (Rice).